We begin with the raw amino-acid sequence, 309 residues long: 4-hydroxy-3-methylbut-2-enyl diphosphate reductase (309 aa).

C12 is a [4Fe-4S] cluster binding site. (2E)-4-hydroxy-3-methylbut-2-enyl diphosphate contacts are provided by H43 and H77. Residues H43 and H77 each coordinate dimethylallyl diphosphate. Residues H43 and H77 each contribute to the isopentenyl diphosphate site. C99 contributes to the [4Fe-4S] cluster binding site. Residue H127 coordinates (2E)-4-hydroxy-3-methylbut-2-enyl diphosphate. A dimethylallyl diphosphate-binding site is contributed by H127. An isopentenyl diphosphate-binding site is contributed by H127. Catalysis depends on E129, which acts as the Proton donor. T167 serves as a coordination point for (2E)-4-hydroxy-3-methylbut-2-enyl diphosphate. C197 contacts [4Fe-4S] cluster. Residues S225, S226, N227, and S269 each contribute to the (2E)-4-hydroxy-3-methylbut-2-enyl diphosphate site. Dimethylallyl diphosphate-binding residues include S225, S226, N227, and S269. Isopentenyl diphosphate contacts are provided by S225, S226, N227, and S269.

The protein belongs to the IspH family. It depends on [4Fe-4S] cluster as a cofactor.

The enzyme catalyses isopentenyl diphosphate + 2 oxidized [2Fe-2S]-[ferredoxin] + H2O = (2E)-4-hydroxy-3-methylbut-2-enyl diphosphate + 2 reduced [2Fe-2S]-[ferredoxin] + 2 H(+). It catalyses the reaction dimethylallyl diphosphate + 2 oxidized [2Fe-2S]-[ferredoxin] + H2O = (2E)-4-hydroxy-3-methylbut-2-enyl diphosphate + 2 reduced [2Fe-2S]-[ferredoxin] + 2 H(+). Its pathway is isoprenoid biosynthesis; dimethylallyl diphosphate biosynthesis; dimethylallyl diphosphate from (2E)-4-hydroxy-3-methylbutenyl diphosphate: step 1/1. It functions in the pathway isoprenoid biosynthesis; isopentenyl diphosphate biosynthesis via DXP pathway; isopentenyl diphosphate from 1-deoxy-D-xylulose 5-phosphate: step 6/6. Functionally, catalyzes the conversion of 1-hydroxy-2-methyl-2-(E)-butenyl 4-diphosphate (HMBPP) into a mixture of isopentenyl diphosphate (IPP) and dimethylallyl diphosphate (DMAPP). Acts in the terminal step of the DOXP/MEP pathway for isoprenoid precursor biosynthesis. In Wolbachia pipientis wMel, this protein is 4-hydroxy-3-methylbut-2-enyl diphosphate reductase.